Here is a 205-residue protein sequence, read N- to C-terminus: Imidazoleglycerol-phosphate dehydratase (205 aa).

It belongs to the imidazoleglycerol-phosphate dehydratase family.

The catalysed reaction is D-erythro-1-(imidazol-4-yl)glycerol 3-phosphate = 3-(imidazol-4-yl)-2-oxopropyl phosphate + H2O. The protein operates within amino-acid biosynthesis; L-histidine biosynthesis; L-histidine from 5-phospho-alpha-D-ribose 1-diphosphate: step 6/9. The chain is Imidazoleglycerol-phosphate dehydratase (HIS3) from Phaffia rhodozyma (Yeast).